The chain runs to 262 residues: Acyl-[acyl-carrier-protein]--UDP-N-acetylglucosamine O-acyltransferase (262 aa).

It belongs to the transferase hexapeptide repeat family. LpxA subfamily. As to quaternary structure, homotrimer.

Its subcellular location is the cytoplasm. The catalysed reaction is a (3R)-hydroxyacyl-[ACP] + UDP-N-acetyl-alpha-D-glucosamine = a UDP-3-O-[(3R)-3-hydroxyacyl]-N-acetyl-alpha-D-glucosamine + holo-[ACP]. Its pathway is glycolipid biosynthesis; lipid IV(A) biosynthesis; lipid IV(A) from (3R)-3-hydroxytetradecanoyl-[acyl-carrier-protein] and UDP-N-acetyl-alpha-D-glucosamine: step 1/6. Its function is as follows. Involved in the biosynthesis of lipid A, a phosphorylated glycolipid that anchors the lipopolysaccharide to the outer membrane of the cell. This Vibrio atlanticus (strain LGP32) (Vibrio splendidus (strain Mel32)) protein is Acyl-[acyl-carrier-protein]--UDP-N-acetylglucosamine O-acyltransferase.